Reading from the N-terminus, the 712-residue chain is MSLTEAEYHELEKQVNLDDIDFSDLEEQYEVDVGLDNYVVVDGAPIAPEAKVPVLIKVLKKLFNTVGKVVEGDEGIYMPLEDGKSKGYLFVQFETSEMAEAAIKQLHGKKLDQKHRLLVNRLSDIEKYGVEGNVAAEFVEPELPPFKSHGYLKSWLQDPQGRDQIALHHSETFGVFWNKKKSDPEPVFEPRKFFTSKYAKFSPKGTYLFSIHPQGVQSWGGADFSSIDKFMHNQVRLVDFSPNEKYMVTLSPLPITAPDSAAERAVFPFGPESYGHKLVIWDLTTGEPARTFALPPHLEGQKEMPWPLVKWSHDDKYCARQGPGALAVYETPSFQLLDKKLIKIDDIVDFEWAPAGVHLANNKSENGHHLLSYWTPESSNQTARVAVMQIPTRQILRTVNLFQVSDCKMHWQSEGKLLCVKVDRHTKSGKTIFTNLEFFKTTEKDIPVEKLELKEIVINFAWEPKSERFVIISRLDDGNLNSAIPKNIIDFYAPDVNGKGKSATSVYKSYKTITDKHSNTVFWSPKGRYVVVATISRSNGEIEFFDVSFDDSNKNAPANVKLLKNDKFSGMTNISWDPSGRFVATWSSSWLHTIENGYKLYEFTGNLLRDDSIDQFKEFIWRPRPASLLNSADRKKVRANLREYSAQFEESDAMEADAALRELIYARRRALEDWKAYRAKHASKAVKANEVQAEIIEEIKEEIIEEKEEIVE.

The tract at residues 1–98 (MSLTEAEYHE…LFVQFETSEM (98 aa)) is sufficient for interaction with HCR1 and TIF32. The interval 1–224 (MSLTEAEYHE…GVQSWGGADF (224 aa)) is sufficient for interaction with PIC8. The region spanning 37 to 124 (NYVVVDGAPI…HRLLVNRLSD (88 aa)) is the RRM domain. WD repeat units follow at residues 191-229 (RKFF…SIDK), 230-293 (FMHN…RTFA), 301-339 (QKEM…LLDK), 342-384 (IKID…QTAR), 452-493 (ELKE…DFYA), 513-555 (ITDK…SNKN), and 566-604 (DKFS…YEFT).

This sequence belongs to the eIF-3 subunit B family. Component of the eukaryotic translation initiation factor 3 (eIF-3) complex.

Its subcellular location is the cytoplasm. Its function is as follows. RNA-binding component of the eukaryotic translation initiation factor 3 (eIF-3) complex, which is involved in protein synthesis of a specialized repertoire of mRNAs and, together with other initiation factors, stimulates binding of mRNA and methionyl-tRNAi to the 40S ribosome. The eIF-3 complex specifically targets and initiates translation of a subset of mRNAs involved in cell proliferation. The protein is Eukaryotic translation initiation factor 3 subunit B of Scheffersomyces stipitis (strain ATCC 58785 / CBS 6054 / NBRC 10063 / NRRL Y-11545) (Yeast).